Here is an 804-residue protein sequence, read N- to C-terminus: G-type lectin S-receptor-like serine/threonine-protein kinase At1g61490 (804 aa).

Positions M1 to A24 are cleaved as a signal peptide. The 120-residue stretch at G25–F144 folds into the Bulb-type lectin domain. The Extracellular segment spans residues G25 to K425. N-linked (GlcNAc...) asparagine glycans are attached at residues N53, N94, N117, N134, N236, and N267. Residues P278 to E314 form the EGF-like domain. 2 disulfide bridges follow: C282/C294 and C288/C302. Residues N320, N336, and N375 are each glycosylated (N-linked (GlcNAc...) asparagine). Residues C333 to H415 enclose the PAN domain. Cystine bridges form between C368/C389 and C372/C378. The chain crosses the membrane as a helical span at residues I426–G446. The Cytoplasmic segment spans residues F447 to R804. The region spanning F490–F775 is the Protein kinase domain. ATP contacts are provided by residues L496–V504 and K518. S524 and S539 each carry phosphoserine. Residues R579–I596 form a caM-binding region. D615 acts as the Proton acceptor in catalysis. Residues S619 and S632 each carry the phosphoserine modification. At T649 the chain carries Phosphothreonine. Phosphoserine is present on S692.

The protein belongs to the protein kinase superfamily. Ser/Thr protein kinase family.

It is found in the cell membrane. The enzyme catalyses L-seryl-[protein] + ATP = O-phospho-L-seryl-[protein] + ADP + H(+). The catalysed reaction is L-threonyl-[protein] + ATP = O-phospho-L-threonyl-[protein] + ADP + H(+). The chain is G-type lectin S-receptor-like serine/threonine-protein kinase At1g61490 from Arabidopsis thaliana (Mouse-ear cress).